We begin with the raw amino-acid sequence, 248 residues long: Large ribosomal subunit protein uL4 (248 aa).

Disordered stretches follow at residues 48 to 96 and 210 to 248; these read GTHK…PVPR and AFSE…RTGA. Over residues 233 to 248 the composition is skewed to basic and acidic residues; it reads DATKARSSRHDDRTGA.

Belongs to the universal ribosomal protein uL4 family. Part of the 50S ribosomal subunit.

In terms of biological role, one of the primary rRNA binding proteins, this protein initially binds near the 5'-end of the 23S rRNA. It is important during the early stages of 50S assembly. It makes multiple contacts with different domains of the 23S rRNA in the assembled 50S subunit and ribosome. Forms part of the polypeptide exit tunnel. The chain is Large ribosomal subunit protein uL4 from Tropheryma whipplei (strain Twist) (Whipple's bacillus).